The chain runs to 276 residues: Diaminopimelate epimerase (276 aa).

The substrate site is built by asparagine 13, glutamine 46, and asparagine 66. The Proton donor role is filled by cysteine 75. Residues 76-77, asparagine 159, asparagine 192, and 210-211 each bind substrate; these read GN and ER. Cysteine 219 (proton acceptor) is an active-site residue. 220–221 provides a ligand contact to substrate; the sequence is GT.

It belongs to the diaminopimelate epimerase family. In terms of assembly, homodimer.

It is found in the cytoplasm. It carries out the reaction (2S,6S)-2,6-diaminopimelate = meso-2,6-diaminopimelate. It participates in amino-acid biosynthesis; L-lysine biosynthesis via DAP pathway; DL-2,6-diaminopimelate from LL-2,6-diaminopimelate: step 1/1. Functionally, catalyzes the stereoinversion of LL-2,6-diaminopimelate (L,L-DAP) to meso-diaminopimelate (meso-DAP), a precursor of L-lysine and an essential component of the bacterial peptidoglycan. This Hahella chejuensis (strain KCTC 2396) protein is Diaminopimelate epimerase.